Consider the following 218-residue polypeptide: uncharacterized protein (218 aa).

This is an uncharacterized protein from Treponema pallidum (strain Nichols).